A 380-amino-acid chain; its full sequence is Probable tRNA-splicing endonuclease subunit sen2 (380 aa).

Active-site residues include tyrosine 281, histidine 289, and lysine 325.

It belongs to the tRNA-intron endonuclease family. In terms of assembly, heterotetramer composed of sen2, sen15, sen34 and sen54. Interacts directly with sen54.

The catalysed reaction is pretRNA = a 3'-half-tRNA molecule with a 5'-OH end + a 5'-half-tRNA molecule with a 2',3'-cyclic phosphate end + an intron with a 2',3'-cyclic phosphate and a 5'-hydroxyl terminus.. Its function is as follows. Constitutes one of the two catalytic subunit of the tRNA-splicing endonuclease complex, a complex responsible for identification and cleavage of the splice sites in pre-tRNA. It cleaves pre-tRNA at the 5'- and 3'-splice sites to release the intron. The products are an intron and two tRNA half-molecules bearing 2',3'-cyclic phosphate and 5'-OH termini. There are no conserved sequences at the splice sites, but the intron is invariably located at the same site in the gene, placing the splice sites an invariant distance from the constant structural features of the tRNA body. This subunit may anchor the endonuclease complex to the nuclear membrane. Probably carries the active site for 5'-splice site cleavage. This is Probable tRNA-splicing endonuclease subunit sen2 (sen2) from Schizosaccharomyces pombe (strain 972 / ATCC 24843) (Fission yeast).